A 434-amino-acid chain; its full sequence is Enolase (434 aa).

Residues 29-56 (SGHTGRAAVPSGASTGSREALEMRDGDK) are disordered. A compositionally biased stretch (basic and acidic residues) spans 47–56 (EALEMRDGDK). Gln-163 provides a ligand contact to (2R)-2-phosphoglycerate. The active-site Proton donor is Glu-205. Mg(2+) is bound by residues Asp-242, Glu-285, and Asp-312. (2R)-2-phosphoglycerate is bound by residues Lys-337, Arg-366, Ser-367, and Lys-388. Lys-337 serves as the catalytic Proton acceptor.

It belongs to the enolase family. In terms of assembly, homooctamer. It depends on Mg(2+) as a cofactor.

It is found in the cytoplasm. The protein resides in the secreted. The protein localises to the cell surface. The enzyme catalyses (2R)-2-phosphoglycerate = phosphoenolpyruvate + H2O. It participates in carbohydrate degradation; glycolysis; pyruvate from D-glyceraldehyde 3-phosphate: step 4/5. Functionally, catalyzes the reversible conversion of 2-phosphoglycerate (2-PG) into phosphoenolpyruvate (PEP). It is essential for the degradation of carbohydrates via glycolysis. This Nitratidesulfovibrio vulgaris (strain DSM 19637 / Miyazaki F) (Desulfovibrio vulgaris) protein is Enolase.